Consider the following 373-residue polypeptide: Spore germination protein KB (373 aa).

10 consecutive transmembrane segments (helical) span residues 11 to 31, 37 to 57, 78 to 98, 105 to 125, 143 to 163, 185 to 205, 219 to 239, 269 to 289, 306 to 326, and 338 to 358; these read LFVM…PGSM, WIAV…YQGI, LSWL…ARVL, LLTF…LMVV, LLFG…IVSG, VFTQ…MIFP, IAMA…ISVL, VFFM…YLYA, LAYP…TNFS, and LYIH…VAVW.

Belongs to the amino acid-polyamine-organocation (APC) superfamily. Spore germination protein (SGP) (TC 2.A.3.9) family.

Its subcellular location is the cell membrane. In terms of biological role, involved in the germination response to the combination of glucose, fructose, L-asparagine, and KCl. This Bacillus subtilis (strain 168) protein is Spore germination protein KB (gerKB).